Here is a 943-residue protein sequence, read N- to C-terminus: Isoleucine--tRNA ligase (943 aa).

Residues 58–68 (PYANGNIHIGH) carry the 'HIGH' region motif. Glutamate 567 lines the L-isoleucyl-5'-AMP pocket. The 'KMSKS' region motif lies at 608–612 (KMSKS). Lysine 611 is an ATP binding site. 4 residues coordinate Zn(2+): cysteine 906, cysteine 909, cysteine 926, and cysteine 929.

It belongs to the class-I aminoacyl-tRNA synthetase family. IleS type 1 subfamily. Monomer. Zn(2+) serves as cofactor.

It localises to the cytoplasm. The catalysed reaction is tRNA(Ile) + L-isoleucine + ATP = L-isoleucyl-tRNA(Ile) + AMP + diphosphate. Its function is as follows. Catalyzes the attachment of isoleucine to tRNA(Ile). As IleRS can inadvertently accommodate and process structurally similar amino acids such as valine, to avoid such errors it has two additional distinct tRNA(Ile)-dependent editing activities. One activity is designated as 'pretransfer' editing and involves the hydrolysis of activated Val-AMP. The other activity is designated 'posttransfer' editing and involves deacylation of mischarged Val-tRNA(Ile). In Stutzerimonas stutzeri (strain A1501) (Pseudomonas stutzeri), this protein is Isoleucine--tRNA ligase.